The primary structure comprises 392 residues: Succinyl-diaminopimelate desuccinylase (392 aa).

Residue His-71 participates in Zn(2+) binding. Residue Asp-73 is part of the active site. Asp-102 is a Zn(2+) binding site. Residue Glu-144 is the Proton acceptor of the active site. Zn(2+) is bound by residues Glu-145, Glu-173, and His-362.

This sequence belongs to the peptidase M20A family. DapE subfamily. As to quaternary structure, homodimer. Zn(2+) is required as a cofactor. Co(2+) serves as cofactor.

It carries out the reaction N-succinyl-(2S,6S)-2,6-diaminopimelate + H2O = (2S,6S)-2,6-diaminopimelate + succinate. Its pathway is amino-acid biosynthesis; L-lysine biosynthesis via DAP pathway; LL-2,6-diaminopimelate from (S)-tetrahydrodipicolinate (succinylase route): step 3/3. Its function is as follows. Catalyzes the hydrolysis of N-succinyl-L,L-diaminopimelic acid (SDAP), forming succinate and LL-2,6-diaminopimelate (DAP), an intermediate involved in the bacterial biosynthesis of lysine and meso-diaminopimelic acid, an essential component of bacterial cell walls. This chain is Succinyl-diaminopimelate desuccinylase, found in Rhodospirillum rubrum (strain ATCC 11170 / ATH 1.1.1 / DSM 467 / LMG 4362 / NCIMB 8255 / S1).